The primary structure comprises 117 residues: DNA-binding protein RdgB (117 aa).

Residues 82 to 102 (NHSALAKKYNVSLQWIYKIVR) constitute a DNA-binding region (H-T-H motif).

It belongs to the c/mor transcriptional regulatory family.

Regulates pectin lyase production in response to DNA damage. This Pectobacterium carotovorum subsp. carotovorum (Erwinia carotovora subsp. carotovora) protein is DNA-binding protein RdgB (rdgB).